Here is a 353-residue protein sequence, read N- to C-terminus: MDFDYENAKFSMPEKRIFDSQGTLDFQNSVAMVRIQYHLQKYITLCKGQQIPDTIKESFFTNIVVELLKRLSALIDETPPERMHSRYGNLSYRDWQTKFQNQLENWLHELLPEKYNNSIIELSYYISNAFGSKERIDYGTGHELSFLAVIICLDMLKIETIKGPALLYCFNSYYDVIQKLILTYKLEPAGSHGVWGLDDHFHFSYILGATQLLDVNTSLIPKDISNTRLMEQNSSSNLFCKSIRFINVVKSGPFSNHSPLLYNISRSVHTWHKMQQGLIKMYKVEVLNKFPVVQHFWFGTAFFPWTSYGNNHSLPIYQPAENNDDADFLTANNATTKMPPPLSTSTSRFIHRR.

The tract at residues 331 to 353 is disordered; that stretch reads ANNATTKMPPPLSTSTSRFIHRR. The segment covering 343–353 has biased composition (polar residues); it reads STSTSRFIHRR.

It belongs to the PTPA-type PPIase family.

Its subcellular location is the cytoplasm. The protein resides in the nucleus. It catalyses the reaction [protein]-peptidylproline (omega=180) = [protein]-peptidylproline (omega=0). In terms of biological role, PPIases accelerate the folding of proteins. It catalyzes the cis-trans isomerization of proline imidic peptide bonds in oligopeptides. Acts as a regulatory subunit for PP2A-like phosphatases modulating their activity or substrate specificity, probably by inducing a conformational change in the catalytic subunit, a direct target of the PPIase. Can reactivate inactive phosphatase PP2A-phosphatase methylesterase complexes (PP2Ai) in presence of ATP and Mg(2+) by dissociating the inactive form from the complex. In Kluyveromyces lactis (strain ATCC 8585 / CBS 2359 / DSM 70799 / NBRC 1267 / NRRL Y-1140 / WM37) (Yeast), this protein is Serine/threonine-protein phosphatase 2A activator 1 (RRD1).